Here is a 298-residue protein sequence, read N- to C-terminus: Glycine--tRNA ligase alpha subunit (298 aa).

The protein belongs to the class-II aminoacyl-tRNA synthetase family. Tetramer of two alpha and two beta subunits.

Its subcellular location is the cytoplasm. The catalysed reaction is tRNA(Gly) + glycine + ATP = glycyl-tRNA(Gly) + AMP + diphosphate. The protein is Glycine--tRNA ligase alpha subunit of Neisseria meningitidis serogroup C / serotype 2a (strain ATCC 700532 / DSM 15464 / FAM18).